We begin with the raw amino-acid sequence, 196 residues long: Probable malonic semialdehyde reductase RutE (196 aa).

Belongs to the nitroreductase family. HadB/RutE subfamily. It depends on FMN as a cofactor.

The enzyme catalyses 3-hydroxypropanoate + NADP(+) = 3-oxopropanoate + NADPH + H(+). May reduce toxic product malonic semialdehyde to 3-hydroxypropionic acid, which is excreted. This is Probable malonic semialdehyde reductase RutE from Shigella flexneri serotype 5b (strain 8401).